A 529-amino-acid polypeptide reads, in one-letter code: Peptide chain release factor 3 (529 aa).

The 270-residue stretch at 11-280 (ARRRTFAIIS…GLVEWAPSPM (270 aa)) folds into the tr-type G domain. GTP contacts are provided by residues 20 to 27 (SHPDAGKT), 88 to 92 (DTPGH), and 142 to 145 (NKLD).

It belongs to the TRAFAC class translation factor GTPase superfamily. Classic translation factor GTPase family. PrfC subfamily.

Its subcellular location is the cytoplasm. Its function is as follows. Increases the formation of ribosomal termination complexes and stimulates activities of RF-1 and RF-2. It binds guanine nucleotides and has strong preference for UGA stop codons. It may interact directly with the ribosome. The stimulation of RF-1 and RF-2 is significantly reduced by GTP and GDP, but not by GMP. In Erwinia tasmaniensis (strain DSM 17950 / CFBP 7177 / CIP 109463 / NCPPB 4357 / Et1/99), this protein is Peptide chain release factor 3.